The primary structure comprises 361 residues: Phospho-N-acetylmuramoyl-pentapeptide-transferase (361 aa).

10 helical membrane passes run 27 to 47 (GALFTAGLFVFWFGPWIISLL), 72 to 92 (TPTMGGLMILAGLLVAVLLWA), 99 to 119 (VWITVVVTLGFGAIGFYDDYL), 139 to 159 (ALIAVAACVAVAEYSAPGLAY), 169 to 189 (AIVNLGLFWILFASFVIVGAG), 200 to 220 (GLAIVPVMIAAATFGIIAYLV), 240 to 260 (LAVVCGALIGAGLGFLWFNAP), 264 to 284 (IFMGDTGSLALGGLLGTVAVA), 289 to 309 (IVLAVVGGLFVLEIASVIIQV), and 338 to 358 (QVVIRFWIIAVVLALLGLATL).

The protein belongs to the glycosyltransferase 4 family. MraY subfamily. Mg(2+) is required as a cofactor.

Its subcellular location is the cell inner membrane. It carries out the reaction UDP-N-acetyl-alpha-D-muramoyl-L-alanyl-gamma-D-glutamyl-meso-2,6-diaminopimeloyl-D-alanyl-D-alanine + di-trans,octa-cis-undecaprenyl phosphate = di-trans,octa-cis-undecaprenyl diphospho-N-acetyl-alpha-D-muramoyl-L-alanyl-D-glutamyl-meso-2,6-diaminopimeloyl-D-alanyl-D-alanine + UMP. The protein operates within cell wall biogenesis; peptidoglycan biosynthesis. In terms of biological role, catalyzes the initial step of the lipid cycle reactions in the biosynthesis of the cell wall peptidoglycan: transfers peptidoglycan precursor phospho-MurNAc-pentapeptide from UDP-MurNAc-pentapeptide onto the lipid carrier undecaprenyl phosphate, yielding undecaprenyl-pyrophosphoryl-MurNAc-pentapeptide, known as lipid I. This Methylobacterium nodulans (strain LMG 21967 / CNCM I-2342 / ORS 2060) protein is Phospho-N-acetylmuramoyl-pentapeptide-transferase.